A 92-amino-acid chain; its full sequence is Small ribosomal subunit protein bS20 (92 aa).

Belongs to the bacterial ribosomal protein bS20 family.

Binds directly to 16S ribosomal RNA. This chain is Small ribosomal subunit protein bS20, found in Methylacidiphilum infernorum (isolate V4) (Methylokorus infernorum (strain V4)).